The sequence spans 284 residues: Four and a half LIM domains protein 5 (284 aa).

Residues 8-32 (CQYCTASLLGKKYVLKDDNLYCISC) form a C4-type zinc finger. 4 consecutive LIM zinc-binding domains span residues 39–100 (NYCE…ECSS), 101–160 (KCFH…KEFA), 161–220 (HYCN…LYAK), and 221–283 (KCAA…ADTD).

Interacts with CREM (via the third LIM domain). Interacts (via second LIM domain) with SPAG8.

The protein localises to the nucleus. May be involved in the regulation of spermatogenesis. Stimulates CREM transcriptional activity in a phosphorylation-independent manner. The sequence is that of Four and a half LIM domains protein 5 (Fhl5) from Rattus norvegicus (Rat).